The primary structure comprises 162 residues: Shikimate kinase (162 aa).

11–16 contacts ATP; sequence GSGKSS. Ser15 is a Mg(2+) binding site. Residues Asp33, Arg57, and Gly80 each coordinate substrate. An ATP-binding site is contributed by Arg116. Arg132 serves as a coordination point for substrate.

Belongs to the shikimate kinase family. Monomer. Mg(2+) is required as a cofactor.

Its subcellular location is the cytoplasm. It carries out the reaction shikimate + ATP = 3-phosphoshikimate + ADP + H(+). The protein operates within metabolic intermediate biosynthesis; chorismate biosynthesis; chorismate from D-erythrose 4-phosphate and phosphoenolpyruvate: step 5/7. Functionally, catalyzes the specific phosphorylation of the 3-hydroxyl group of shikimic acid using ATP as a cosubstrate. The sequence is that of Shikimate kinase from Helicobacter pylori (strain HPAG1).